Here is a 219-residue protein sequence, read N- to C-terminus: Probable GTP-binding protein EngB (219 aa).

The region spanning 42 to 219 (SVPEIAFAGR…RTAVLEAVEL (178 aa)) is the EngB-type G domain. GTP contacts are provided by residues 50 to 57 (GRSNVGKS), 77 to 81 (GRTQE), 97 to 100 (DMPG), 164 to 167 (TKAD), and 198 to 200 (TSS). 2 residues coordinate Mg(2+): serine 57 and threonine 79.

Belongs to the TRAFAC class TrmE-Era-EngA-EngB-Septin-like GTPase superfamily. EngB GTPase family. Requires Mg(2+) as cofactor.

In terms of biological role, necessary for normal cell division and for the maintenance of normal septation. This is Probable GTP-binding protein EngB from Sphingopyxis alaskensis (strain DSM 13593 / LMG 18877 / RB2256) (Sphingomonas alaskensis).